Here is a 257-residue protein sequence, read N- to C-terminus: L-aspartate dehydrogenase (257 aa).

Ala124 and Asn180 together coordinate NAD(+). Residue His208 is part of the active site.

The protein belongs to the L-aspartate dehydrogenase family.

The catalysed reaction is L-aspartate + NADP(+) + H2O = oxaloacetate + NH4(+) + NADPH + H(+). The enzyme catalyses L-aspartate + NAD(+) + H2O = oxaloacetate + NH4(+) + NADH + H(+). It functions in the pathway cofactor biosynthesis; NAD(+) biosynthesis; iminoaspartate from L-aspartate (dehydrogenase route): step 1/1. Functionally, specifically catalyzes the NAD or NADP-dependent dehydrogenation of L-aspartate to iminoaspartate. This Methanothermobacter thermautotrophicus (strain ATCC 29096 / DSM 1053 / JCM 10044 / NBRC 100330 / Delta H) (Methanobacterium thermoautotrophicum) protein is L-aspartate dehydrogenase.